The primary structure comprises 256 residues: tRNA pseudouridine synthase A (256 aa).

Aspartate 49 acts as the Nucleophile in catalysis. Residue tyrosine 104 coordinates substrate.

Belongs to the tRNA pseudouridine synthase TruA family.

It carries out the reaction uridine(38/39/40) in tRNA = pseudouridine(38/39/40) in tRNA. Functionally, formation of pseudouridine at positions 38, 39 and 40 in the anticodon stem and loop of transfer RNAs. In Methanopyrus kandleri (strain AV19 / DSM 6324 / JCM 9639 / NBRC 100938), this protein is tRNA pseudouridine synthase A.